A 165-amino-acid chain; its full sequence is Large ribosomal subunit protein uL10 (165 aa).

It belongs to the universal ribosomal protein uL10 family. In terms of assembly, part of the ribosomal stalk of the 50S ribosomal subunit. The N-terminus interacts with L11 and the large rRNA to form the base of the stalk. The C-terminus forms an elongated spine to which L12 dimers bind in a sequential fashion forming a multimeric L10(L12)X complex.

Functionally, forms part of the ribosomal stalk, playing a central role in the interaction of the ribosome with GTP-bound translation factors. This chain is Large ribosomal subunit protein uL10, found in Burkholderia thailandensis (strain ATCC 700388 / DSM 13276 / CCUG 48851 / CIP 106301 / E264).